Reading from the N-terminus, the 510-residue chain is Bifunctional pantoate ligase/cytidylate kinase (510 aa).

A pantoate--beta-alanine ligase region spans residues 1–276 (MKKVIIRKTE…CGETRLIDHV (276 aa)). Residue 29 to 36 (MGNLHNGH) coordinates ATP. Residue His-36 is the Proton donor of the active site. Gln-61 contacts (R)-pantoate. Gln-61 serves as a coordination point for beta-alanine. 150–153 (GEKD) is an ATP binding site. Residue Gln-156 coordinates (R)-pantoate. 187–190 (LSSR) provides a ligand contact to ATP. The interval 277–510 (FLMKRRPIIA…DKIPKETEIK (234 aa)) is cytidylate kinase.

This sequence in the N-terminal section; belongs to the pantothenate synthetase family. In the C-terminal section; belongs to the cytidylate kinase family. Type 1 subfamily.

The protein resides in the cytoplasm. The catalysed reaction is (R)-pantoate + beta-alanine + ATP = (R)-pantothenate + AMP + diphosphate + H(+). It carries out the reaction CMP + ATP = CDP + ADP. It catalyses the reaction dCMP + ATP = dCDP + ADP. It participates in cofactor biosynthesis; (R)-pantothenate biosynthesis; (R)-pantothenate from (R)-pantoate and beta-alanine: step 1/1. In terms of biological role, catalyzes the condensation of pantoate with beta-alanine in an ATP-dependent reaction via a pantoyl-adenylate intermediate. Catalyzes the transfer of a phosphate group from ATP to either CMP or dCMP to form CDP or dCDP and ADP, respectively. This is Bifunctional pantoate ligase/cytidylate kinase from Prochlorococcus marinus (strain MIT 9215).